Consider the following 301-residue polypeptide: Probable serine acetyltransferase 3 (301 aa).

The tract at residues 280–301 is disordered; it reads IGKKAEPQRELPGVTMEQRWSD.

The protein belongs to the transferase hexapeptide repeat family. Homomultimer.

It carries out the reaction L-serine + acetyl-CoA = O-acetyl-L-serine + CoA. The protein operates within amino-acid biosynthesis; L-cysteine biosynthesis; L-cysteine from L-serine: step 1/2. This Oryza sativa subsp. japonica (Rice) protein is Probable serine acetyltransferase 3 (SAT3).